Consider the following 356-residue polypeptide: MSL complex subunit 3B (356 aa).

The MRG domain occupies 2 to 350 (EERTVTLEIP…SEVHYSTRNP (349 aa)). 2 disordered regions span residues 135–210 (TNRS…WQQD) and 225–247 (KTPVHSRSSSPTLTPSQEGSPVF). Low complexity predominate over residues 142 to 156 (LSPSLRLLNPSRPQS). Composition is skewed to polar residues over residues 178–189 (AVQSLRRSSPHT) and 229–243 (HSRSSSPTLTPSQEG).

It is found in the nucleus. In terms of biological role, probable non-catalytic component of the MSL histone acetyltransferase complex, a multiprotein complex that mediates the majority of histone H4 acetylation at 'Lys-16' (H4K16ac), an epigenetic mark that prevents chromatin compaction. In Homo sapiens (Human), this protein is MSL complex subunit 3B.